We begin with the raw amino-acid sequence, 411 residues long: MEELLERVFSFSDVDKLIDFISYELQKPVILESADFFLLAYNSYYINHFDSANQQTIFSKKCPVQIFERFLKDGIIEKLKTEPEPFRVNKIESIGLNQRVVVSAKHKGEVMGYIWIQELDQNLTDEELDFLYETSFHVGKIIYKTNKLKQEKEEKAEDLIKRAIYQQFTSEKELRREAERINTVLPSMFSVVILHAANGDGEAVEDLKENIRSYLNLRDKVSHVLTIESNIVIVVASFSQKSSVSSAASEFINKLLTHFHFQKIPTPIYIGIGNEYNHLLKLGKSYTEALEVIKAAEITGNQENIPYEYAKLGIYRYLESIEQKNEFLEYENKDLALLKAKDEESSTELLKTLEIYLLNNCKTKPAAEQLFIHQNTLNYRIKQITEMTSIDLSDFRTRCQLYLDLMLMKKK.

Belongs to the CdaR family.

Its function is as follows. Activates transcription of the putBCP operon. Requires proline as a coactivator. The sequence is that of Proline-responsive transcriptional activator PutR from Bacillus subtilis (strain 168).